Consider the following 41-residue polypeptide: MYIEGVKIKKIAMFFLGILVGVFIVLFFRNYFVLLLEYIFG.

The helical transmembrane segment at 8–28 threads the bilayer; the sequence is IKKIAMFFLGILVGVFIVLFF.

The protein resides in the membrane. This is an uncharacterized protein from Streptococcus pneumoniae serotype 2 (strain D39 / NCTC 7466).